We begin with the raw amino-acid sequence, 128 residues long: Large ribosomal subunit protein bL20 (128 aa).

This sequence belongs to the bacterial ribosomal protein bL20 family.

Binds directly to 23S ribosomal RNA and is necessary for the in vitro assembly process of the 50S ribosomal subunit. It is not involved in the protein synthesizing functions of that subunit. The chain is Large ribosomal subunit protein bL20 from Corynebacterium efficiens (strain DSM 44549 / YS-314 / AJ 12310 / JCM 11189 / NBRC 100395).